A 291-amino-acid chain; its full sequence is Formamidopyrimidine-DNA glycosylase (291 aa).

Pro-2 functions as the Schiff-base intermediate with DNA in the catalytic mechanism. Glu-3 serves as the catalytic Proton donor. Catalysis depends on Lys-60, which acts as the Proton donor; for beta-elimination activity. The DNA site is built by His-97, Arg-116, and Arg-161. The segment at 246-280 adopts an FPG-type zinc-finger fold; that stretch reads WVYNRAGEPCRVCGMPIQRIRLAGRSSHFCSECQT. The active-site Proton donor; for delta-elimination activity is the Arg-270.

It belongs to the FPG family. As to quaternary structure, monomer. Zn(2+) is required as a cofactor.

It carries out the reaction Hydrolysis of DNA containing ring-opened 7-methylguanine residues, releasing 2,6-diamino-4-hydroxy-5-(N-methyl)formamidopyrimidine.. It catalyses the reaction 2'-deoxyribonucleotide-(2'-deoxyribose 5'-phosphate)-2'-deoxyribonucleotide-DNA = a 3'-end 2'-deoxyribonucleotide-(2,3-dehydro-2,3-deoxyribose 5'-phosphate)-DNA + a 5'-end 5'-phospho-2'-deoxyribonucleoside-DNA + H(+). Its function is as follows. Involved in base excision repair of DNA damaged by oxidation or by mutagenic agents. Acts as a DNA glycosylase that recognizes and removes damaged bases. Has a preference for oxidized purines, such as 7,8-dihydro-8-oxoguanine (8-oxoG). Has AP (apurinic/apyrimidinic) lyase activity and introduces nicks in the DNA strand. Cleaves the DNA backbone by beta-delta elimination to generate a single-strand break at the site of the removed base with both 3'- and 5'-phosphates. The sequence is that of Formamidopyrimidine-DNA glycosylase from Nostoc punctiforme (strain ATCC 29133 / PCC 73102).